Consider the following 145-residue polypeptide: Cystatin-like 1 (145 aa).

An N-terminal signal peptide occupies residues 1-19 (MGIGCWRNPLLLLIALVLS). A Cystatin domain is found at 37-115 (SKKNMNSTLN…KKLRKSLICE (79 aa)). Asparagine 42 carries an N-linked (GlcNAc...) asparagine glycan. 2 cysteine pairs are disulfide-bonded: cysteine 91–cysteine 101 and cysteine 114–cysteine 134.

Belongs to the cystatin family.

It localises to the secreted. This is Cystatin-like 1 (CSTL1) from Homo sapiens (Human).